A 630-amino-acid chain; its full sequence is Subtilisin-like protease 1 (630 aa).

An N-terminal signal peptide occupies residues 1 to 25; it reads MVLTRRAALLLCPWVIQLVIKRTLA. The propeptide at 26–202 is inhibition peptide; it reads GDILPNEGKK…IESDKLVGAD (177 aa). Residues 72 to 125 are disordered; sequence NAYNPDRDAPKEELQKLQDQQETPSKQPNNLRNSPQKRAEKKESPGKNKKSLRL. Basic and acidic residues predominate over residues 76-87; the sequence is PDRDAPKEELQK. The segment covering 94 to 107 has biased composition (polar residues); sequence TPSKQPNNLRNSPQ. A compositionally biased stretch (basic and acidic residues) spans 108–117; sequence KRAEKKESPG. Ca(2+) is bound by residues E129, N130, T133, P135, and G190. Positions 230–254 are disordered; it reads LEVPSGESPPSHAASSGSPFDDDDD. Residues 233-248 are compositionally biased toward low complexity; that stretch reads PSGESPPSHAASSGSP. Position 281 (D281) interacts with Ca(2+). The region spanning 287-604 is the Peptidase S8 domain; sequence QWGLDLARLD…GGYVDILRAV (318 aa). Intrachain disulfides connect C313/C423, C402/C419, and C465/C478. The active-site Charge relay system is the D316. Residues D325, E336, R340, V343, D344, D345, D346, N348, V350, D352, and D353 each coordinate Ca(2+). The active-site Charge relay system is the H372. Positions 383, 386, 388, and 390 each coordinate Ca(2+). N-linked (GlcNAc...) asparagine glycosylation occurs at N546. S549 functions as the Charge relay system in the catalytic mechanism.

It belongs to the peptidase S8 family. As to quaternary structure, heterodimer between p54 form and prodomain p31; the interaction inhibits p54 catalytic activity. Heterodimer p31-p54 is monomeric at basic pH and dimeric at acidic pH; dimerization is driven by the N-terminal prodomain (p31). Ca(2+) is required as a cofactor. The prodomain (p31) is cleaved, probably by autocatalysis, and remains non-covalently associated with the p54 form as an inhibitor. p54 is further cleaved into the p45/p47 forms. In terms of processing, the relevance of the N-glycosylation is not clear. In an insect expression system, SUB1 glycosylation appears to affect its processing into the active mature form suggesting that SUB1 may not be N-glycosylated in parasites.

Its subcellular location is the secreted. It localises to the parasitophorous vacuole lumen. The catalysed reaction is Hydrolysis of proteins with broad specificity for peptide bonds, and a preference for a large uncharged residue in P1. Hydrolyzes peptide amides.. With respect to regulation, inhibited by peptidic alpha-ketoamide inhibitors. Inhibited by the alpha-ketoamide nonapeptide JMV5126 (isocaproyl-KITAQ(CO)DDEE-NH2). Inhibited by the alpha-ketoamide peptide MAM-117. Functionally, serine protease which plays an essential role in merozoite invasion of and egress from host erythrocytes by processing and activating various merozoite surface and parasitophorous vacuole proteins. This is Subtilisin-like protease 1 from Plasmodium vivax.